The primary structure comprises 227 residues: Casparian strip membrane protein 2 (227 aa).

The Cytoplasmic portion of the chain corresponds to 1-59 (MSSTSEATVIHMDGAAGKTPATAVPPPPPPAPTAPVQQQRKAGGVPFLLRSGAEGFRRC). Residues 17–37 (GKTPATAVPPPPPPAPTAPVQ) form a disordered region. The span at 23–33 (AVPPPPPPAPT) shows a compositional bias: pro residues. A helical membrane pass occupies residues 60-80 (MALLDLLLRVAAMGPTLAAAI). The Extracellular segment spans residues 81–107 (STGTSDETLSVFTHYFQFRARFDDFSA). Residues 108 to 128 (FTFFMVANAVAAGYLLMSLPF) traverse the membrane as a helical segment. Topologically, residues 129-149 (SAFGVIRPKATSVRLLLLICD) are cytoplasmic. The helical transmembrane segment at 150 to 170 (TIMVVLVTAAASAAAAIVYVA) threads the bilayer. The Extracellular segment spans residues 171–197 (HEGNRRANWVPICMQFHGFCKRTSGAV). Residues 198-218 (VASFLAVLIFILLVFLGACAI) form a helical membrane-spanning segment. The Cytoplasmic segment spans residues 219–227 (RRRHTTTKH).

It belongs to the Casparian strip membrane proteins (CASP) family. As to quaternary structure, homodimer and heterodimers.

Its subcellular location is the cell membrane. In terms of biological role, regulates membrane-cell wall junctions and localized cell wall deposition. Required for establishment of the Casparian strip membrane domain (CSD) and the subsequent formation of Casparian strips, a cell wall modification of the root endodermis that determines an apoplastic barrier between the intraorganismal apoplasm and the extraorganismal apoplasm and prevents lateral diffusion. This is Casparian strip membrane protein 2 from Brachypodium distachyon (Purple false brome).